Here is a 140-residue protein sequence, read N- to C-terminus: Peptide methionine sulfoxide reductase MsrB (140 aa).

In terms of domain architecture, MsrB spans 10–132 (EEDWKSVLTP…NSVSLGFTKE (123 aa)). Positions 49, 52, 98, and 101 each coordinate Zn(2+). C121 (nucleophile) is an active-site residue.

This sequence belongs to the MsrB Met sulfoxide reductase family. Zn(2+) serves as cofactor.

The enzyme catalyses L-methionyl-[protein] + [thioredoxin]-disulfide + H2O = L-methionyl-(R)-S-oxide-[protein] + [thioredoxin]-dithiol. The polypeptide is Peptide methionine sulfoxide reductase MsrB (Methanosarcina mazei (strain ATCC BAA-159 / DSM 3647 / Goe1 / Go1 / JCM 11833 / OCM 88) (Methanosarcina frisia)).